A 281-amino-acid chain; its full sequence is Diaminopimelate epimerase (281 aa).

Substrate is bound by residues N13, Q51, and N70. C79 (proton donor) is an active-site residue. Substrate contacts are provided by residues 80 to 81, N163, N196, and 214 to 215; these read GN and ER. The active-site Proton acceptor is the C223. A substrate-binding site is contributed by 224–225; the sequence is GS.

The protein belongs to the diaminopimelate epimerase family. As to quaternary structure, homodimer.

It is found in the cytoplasm. The enzyme catalyses (2S,6S)-2,6-diaminopimelate = meso-2,6-diaminopimelate. The protein operates within amino-acid biosynthesis; L-lysine biosynthesis via DAP pathway; DL-2,6-diaminopimelate from LL-2,6-diaminopimelate: step 1/1. In terms of biological role, catalyzes the stereoinversion of LL-2,6-diaminopimelate (L,L-DAP) to meso-diaminopimelate (meso-DAP), a precursor of L-lysine and an essential component of the bacterial peptidoglycan. The protein is Diaminopimelate epimerase of Alcanivorax borkumensis (strain ATCC 700651 / DSM 11573 / NCIMB 13689 / SK2).